Reading from the N-terminus, the 61-residue chain is Small ribosomal subunit protein uS14 (61 aa).

Residues Cys24, Cys27, Cys40, and Cys43 each contribute to the Zn(2+) site.

Belongs to the universal ribosomal protein uS14 family. Zinc-binding uS14 subfamily. In terms of assembly, part of the 30S ribosomal subunit. Contacts proteins S3 and S10. Requires Zn(2+) as cofactor.

Functionally, binds 16S rRNA, required for the assembly of 30S particles and may also be responsible for determining the conformation of the 16S rRNA at the A site. The sequence is that of Small ribosomal subunit protein uS14 from Thermodesulfovibrio yellowstonii (strain ATCC 51303 / DSM 11347 / YP87).